Reading from the N-terminus, the 451-residue chain is Epi-neemfruitin B 7-O-acetyltransferse L7AT (451 aa).

Catalysis depends on proton acceptor residues His-165 and Asp-384.

It belongs to the plant acyltransferase family. In terms of assembly, monomer. In terms of tissue distribution, mainly expressed in petioles and, to a lower extent, in roots.

It carries out the reaction epi-neemfruitin B + acetyl-CoA = 7-acetyl-epi-neemfruitin B + CoA. Its pathway is secondary metabolite biosynthesis; terpenoid biosynthesis. Its function is as follows. Acetyltransferase involved in the biosynthesis of limonoids triterpene natural products such as azadirachtin, an antifeedant widely used as bioinsecticide, and possessing many medicinal applications including anti-tumoral, anti-malarial, anti-rheumatic, antibacterial, anti-inflammatory, anti-pyretic and diuretic effects. Catalyzes the formation of 7-acetyl-epi-neemfruitin B from epi-neemfruitin B. The polypeptide is Epi-neemfruitin B 7-O-acetyltransferse L7AT (Melia azedarach (Chinaberry tree)).